A 452-amino-acid polypeptide reads, in one-letter code: Probable glycine dehydrogenase (decarboxylating) subunit 1 (452 aa).

Belongs to the GcvP family. N-terminal subunit subfamily. The glycine cleavage system is composed of four proteins: P, T, L and H. In this organism, the P 'protein' is a heterodimer of two subunits.

The enzyme catalyses N(6)-[(R)-lipoyl]-L-lysyl-[glycine-cleavage complex H protein] + glycine + H(+) = N(6)-[(R)-S(8)-aminomethyldihydrolipoyl]-L-lysyl-[glycine-cleavage complex H protein] + CO2. The glycine cleavage system catalyzes the degradation of glycine. The P protein binds the alpha-amino group of glycine through its pyridoxal phosphate cofactor; CO(2) is released and the remaining methylamine moiety is then transferred to the lipoamide cofactor of the H protein. The sequence is that of Probable glycine dehydrogenase (decarboxylating) subunit 1 from Alcanivorax borkumensis (strain ATCC 700651 / DSM 11573 / NCIMB 13689 / SK2).